The following is a 537-amino-acid chain: MLKTKQQIIALNRFRCWTSNLPGLQQQCRNQSTVTAASSEWEQAKPLSEMPTISPFQLLRHFLPGGKYTNLDTTQLMLAFRRDFGPIVYFKGSLGKPDVVMTNNPHDFEKALHNQGIWPMRPGMEYLSYHRQVHRKDIFQGVEGLLGSQGEAWGSFRSAVNPVLMQPKNVHLYFNKMSEVNKEFMERIRKIRDPQTLEVPDNFEEEINRWTLESVSVVALDKQLGLITKNRDDPTPKRLFKALTDFFEASGDLEFQPSIWKYIKTPTFKKAIRSLDEITDITKMYVDEAFERIEAENKNRNVEKPENEKSVLEKLVKIDKQIAMVMAMDMLMAGVDTTSSTFTGLLLCLAKNPEKQKKLREEIMQLLPQKDSEFNEAVFKNMPYLRACIKESLRVYPLTVGNARTQANDVVISGYRVPKGTLISMNSVTLIKDDAHYPRASEFLPERWLRASKENEKSAECPHALKASSPFVYLPFGFGSRSCIGRRIAEMELELGIARLIRNFHVEFNYPTDNAFKSLLISVPNIPLKFKFTDVDN.

C483 contributes to the heme binding site.

This sequence belongs to the cytochrome P450 family. The cofactor is heme.

The sequence is that of Cytochrome P450 CYP12A2 (CYP12A2) from Musca domestica (House fly).